Here is a 138-residue protein sequence, read N- to C-terminus: Transcription antitermination protein NusB (138 aa).

It belongs to the NusB family.

Involved in transcription antitermination. Required for transcription of ribosomal RNA (rRNA) genes. Binds specifically to the boxA antiterminator sequence of the ribosomal RNA (rrn) operons. In Coxiella burnetii (strain Dugway 5J108-111), this protein is Transcription antitermination protein NusB.